A 1150-amino-acid chain; its full sequence is PAN2-PAN3 deadenylation complex catalytic subunit PAN2 (1150 aa).

WD repeat units lie at residues Ala26–Gln67, Gly114–Glu156, Pro158–Thr194, and Gly290–Val328. Positions Ser326–Ser471 are linker. Positions Val472–Lys862 constitute a USP domain. The 169-residue stretch at Ala911 to Ala1079 folds into the Exonuclease domain. A divalent metal cation is bound by residues Asp913, Glu915, Asp1022, and Asp1075. The disordered stretch occupies residues Gly1118 to Ser1150.

It belongs to the peptidase C19 family. PAN2 subfamily. As to quaternary structure, forms a heterotrimer with an asymmetric homodimer of the regulatory subunit PAN3 to form the poly(A)-nuclease (PAN) deadenylation complex. The cofactor is a divalent metal cation.

It is found in the cytoplasm. The enzyme catalyses Exonucleolytic cleavage of poly(A) to 5'-AMP.. Positively regulated by the regulatory subunit PAN3. In terms of biological role, catalytic subunit of the poly(A)-nuclease (PAN) deadenylation complex, one of two cytoplasmic mRNA deadenylases involved in mRNA turnover. PAN specifically shortens poly(A) tails of RNA and the activity is stimulated by poly(A)-binding protein PAB1. PAN deadenylation is followed by rapid degradation of the shortened mRNA tails by the CCR4-NOT complex. Deadenylated mRNAs are then degraded by two alternative mechanisms, namely exosome-mediated 3'-5' exonucleolytic degradation, or deadenylation-dependent mRNA decaping and subsequent 5'-3' exonucleolytic degradation by XRN1. May also be involved in post-transcriptional maturation of mRNA poly(A) tails. The polypeptide is PAN2-PAN3 deadenylation complex catalytic subunit PAN2 (Pyricularia oryzae (strain 70-15 / ATCC MYA-4617 / FGSC 8958) (Rice blast fungus)).